A 415-amino-acid polypeptide reads, in one-letter code: Carboxypeptidase G2 (415 aa).

The signal sequence occupies residues methionine 1–threonine 22. Histidine 112 contributes to the Zn(2+) binding site. Residue aspartate 114 is part of the active site. Aspartate 141 contacts Zn(2+). Glutamate 175 serves as the catalytic Proton acceptor. Zn(2+) is bound by residues glutamate 176, glutamate 200, and histidine 385.

The protein belongs to the peptidase M20A family. Homodimer. Zn(2+) serves as cofactor.

The catalysed reaction is Release of C-terminal glutamate residues from a wide range of N-acylating moieties, including peptidyl, aminoacyl, benzoyl, benzyloxycarbonyl, folyl and pteroyl groups.. Catalyzes the hydrolysis of reduced and non-reduced folates to pteroates and L-glutamate. This enzyme has a broad specificity. This is Carboxypeptidase G2 (cpg2) from Pseudomonas sp. (strain RS-16).